The chain runs to 184 residues: Photosystem I assembly protein Ycf4 (184 aa).

The next 2 membrane-spanning stretches (helical) occupy residues 22–42 (FCWA…GTSS) and 57–77 (IVFF…LFIS).

The protein belongs to the Ycf4 family.

It localises to the plastid. It is found in the chloroplast thylakoid membrane. Its function is as follows. Seems to be required for the assembly of the photosystem I complex. In Lactuca sativa (Garden lettuce), this protein is Photosystem I assembly protein Ycf4.